The following is a 502-amino-acid chain: ATP synthase subunit alpha (502 aa).

169–176 is an ATP binding site; that stretch reads GDRQTGKT.

This sequence belongs to the ATPase alpha/beta chains family. In terms of assembly, F-type ATPases have 2 components, CF(1) - the catalytic core - and CF(0) - the membrane proton channel. CF(1) has five subunits: alpha(3), beta(3), gamma(1), delta(1), epsilon(1). CF(0) has three main subunits: a(1), b(2) and c(9-12). The alpha and beta chains form an alternating ring which encloses part of the gamma chain. CF(1) is attached to CF(0) by a central stalk formed by the gamma and epsilon chains, while a peripheral stalk is formed by the delta and b chains.

It is found in the cell membrane. It carries out the reaction ATP + H2O + 4 H(+)(in) = ADP + phosphate + 5 H(+)(out). Its function is as follows. Produces ATP from ADP in the presence of a proton gradient across the membrane. The alpha chain is a regulatory subunit. The chain is ATP synthase subunit alpha from Clostridium perfringens (strain ATCC 13124 / DSM 756 / JCM 1290 / NCIMB 6125 / NCTC 8237 / Type A).